The primary structure comprises 1680 residues: GRIP and coiled-coil domain-containing protein 2 (1680 aa).

Position 1 is an N-acetylmethionine (methionine 1). The segment covering 1–14 (MEDSAPDAVAAAPS) has biased composition (low complexity). Disordered stretches follow at residues 1-23 (MEDSAPDAVAAAPSGTPKSKLET) and 1468-1522 (KSEP…SSAG). The stretch at 31-1614 (KFAKKQMMLL…REKSVANLEY (1584 aa)) forms a coiled coil. The span at 1469-1484 (SEPSTRSPASSHQPSK) shows a compositional bias: polar residues. Residues serine 1475 and serine 1479 each carry the phosphoserine modification. Residues 1570-1609 (HLNGLLRETEATNAILMEQIKLLKSEIRRLERNQEREKSV) are mediates interaction with RAB6A. Residues 1570 to 1680 (HLNGLLRETE…SYLHSWSGLR (111 aa)) are mediates interaction with RAB9A. The GRIP domain maps to 1605 to 1655 (REKSVANLEYLKNVLLRFIFLKPGSERERLLPVIDTMLQLSPEEKGKLATV).

Homodimer. Interacts (via GRIP domain) with RAB6A (preferentially in its GTP-bound form). May interact (RAB6A-dependent) with ARL1; might be involved in GCC2 Golgi localization. Interacts (probably via GRIP domain) with RAB9A (preferentially in its GTP-bound form). Interacts with CLASP1 and CLASP2; recruits both proteins to membranes of the TGN. Interacts with STX16.

Its subcellular location is the cytoplasm. The protein localises to the golgi apparatus. It localises to the trans-Golgi network membrane. In terms of biological role, golgin which probably tethers transport vesicles to the trans-Golgi network (TGN) and regulates vesicular transport between the endosomes and the Golgi. As a RAB9A effector it is involved in recycling of the mannose 6-phosphate receptor from the late endosomes to the TGN. May also play a role in transport between the recycling endosomes and the Golgi. Required for maintenance of the Golgi structure, it is involved in the biogenesis of noncentrosomal, Golgi-associated microtubules through recruitment of CLASP1 and CLASP2. This Mus musculus (Mouse) protein is GRIP and coiled-coil domain-containing protein 2 (Gcc2).